The sequence spans 545 residues: Autoimmune regulator (545 aa).

The HSR domain maps to 1–105 (MATDAALRRL…ILDSFPKDVD (105 aa)). Short sequence motifs (LXXLL motif) lie at residues 7 to 11 (LRRLL) and 63 to 67 (LSWLL). 2 disordered regions span residues 101-178 (PKDV…LPLG) and 234-290 (SKFE…SDPQ). Positions 116–128 (PAVPKALVPPPRL) are enriched in pro residues. Residues 140–152 (AAAPAALTPRGTA) are compositionally biased toward low complexity. Positions 181-280 (IQTMSASVQR…ARLGQQGSVP (100 aa)) constitute an SAND domain. Interaction with histone H3 not methylated at 'Lys-4' stretches follow at residues 295-298 (NEDE), 304-312 (DGGELICCD), and 331-335 (PSGTW). Residues 296–343 (EDECAVCRDGGELICCDGCPRAFHLACLSPPLREIPSGTWRCSSCLQA) form a PHD-type 1 zinc finger. The disordered stretch occupies residues 348–382 (VQPRAEEPRPQEPPVETPLPPGLRSAGEEVRGPPG). Residues 358-368 (QEPPVETPLPP) show a composition bias toward pro residues. The short motif at 414 to 418 (LHPLL) is the LXXLL motif 3 element. The PHD-type 2 zinc finger occupies 434–475 (CGVCGDGTDVLRCTHCAAAFHWRCHFPAGTSRPGTGLRCRSC). The disordered stretch occupies residues 489–508 (APSPARLAPGPAKDDTASHE). Positions 516–520 (LESLL) match the LXXLL motif 4 motif.

Homodimer and homotetramer. Interacts with CREBBP. Interacts preferentially with histone H3 that is not methylated at 'Lys-4'. Binds with lower affinity to histone H3 that is monomethylated at 'Lys-4'. Trimethylation of histone H3 at 'Lys-4' or phosphorylation at 'Thr-3' abolish the interaction. Binds with lower affinity to histone H3 that is acetylated at 'Lys-4', or that is acetylated at 'Lys-9' or trimethylated at 'Lys-9'. Binds histone H3 that is dimethylated at 'Arg-2' with very low affinity. In terms of processing, phosphorylated. Phosphorylation could trigger oligomerization. In terms of tissue distribution, widely expressed. Expressed at higher level in thymus (medullary epithelial cells and monocyte-dendritic cells), pancreas, adrenal cortex and testis. Expressed at lower level in the spleen, fetal liver and lymph nodes. In secondary lymphoid organs, expressed in a discrete population of bone marrow-derived toleregenic antigen presenting cells (APCs) called extrathymic AIRE expressing cells (eTAC)(at protein level). Isoform 2 and isoform 3 seem to be less frequently expressed than isoform 1, if at all.

The protein resides in the nucleus. It is found in the cytoplasm. Functionally, transcription factor playing an essential role to promote self-tolerance in the thymus by regulating the expression of a wide array of self-antigens that have the commonality of being tissue-restricted in their expression pattern in the periphery, called tissue restricted antigens (TRA). Binds to G-doublets in an A/T-rich environment; the preferred motif is a tandem repeat of 5'-ATTGGTTA-3' combined with a 5'-TTATTA-3' box. Binds to nucleosomes. Binds to chromatin and interacts selectively with histone H3 that is not methylated at 'Lys-4', not phosphorylated at 'Thr-3' and not methylated at 'Arg-2'. Functions as a sensor of histone H3 modifications that are important for the epigenetic regulation of gene expression. Mainly expressed by medullary thymic epithelial cells (mTECs), induces the expression of thousands of tissue-restricted proteins, which are presented on major histocompatibility complex class I (MHC-I) and MHC-II molecules to developing T-cells percolating through the thymic medulla. Also induces self-tolerance through other mechanisms such as the regulation of the mTEC differentiation program. Controls the medullary accumulation of thymic dendritic cells and the development of regulatory T-cell through the regulation of XCL1 expression. Regulates the production of CCR4 and CCR7 ligands in medullary thymic epithelial cells and alters the coordinated maturation and migration of thymocytes. In thimic B-cells, allows the presentation of licensing-dependent endogenous self-anitgen for negative selection. In secondary lymphoid organs, induces functional inactivation of CD4(+) T-cells. Expressed by a distinct bone marrow-derived population, induces self-tolerance through a mechanism that does not require regulatory T-cells and is resitant to innate inflammatory stimuli. This is Autoimmune regulator (AIRE) from Homo sapiens (Human).